The chain runs to 158 residues: MENIPMTVFGAKVLEAELLKLKNVSRPRIIENIVTARAHGDLKENAEYHAAKEEQGFIEGRIKEVESKLSRMQVIDVTKLNQDGRCVFGTTITLMNIEDDSETTYKIVGEDEADIILGKISCHSPIASALMGNEEGDEVTVKAPKGDIVYEVLSVEYI.

This sequence belongs to the GreA/GreB family.

Its function is as follows. Necessary for efficient RNA polymerase transcription elongation past template-encoded arresting sites. The arresting sites in DNA have the property of trapping a certain fraction of elongating RNA polymerases that pass through, resulting in locked ternary complexes. Cleavage of the nascent transcript by cleavage factors such as GreA or GreB allows the resumption of elongation from the new 3'terminus. GreA releases sequences of 2 to 3 nucleotides. The chain is Transcription elongation factor GreA from Ruthia magnifica subsp. Calyptogena magnifica.